The chain runs to 89 residues: Phosphocarrier protein HPr (89 aa).

Residues 1 to 88 form the HPr domain; it reads MLEHELTVTN…ELFENRFNED (88 aa). The active-site Pros-phosphohistidine intermediate is the His15. Ser46 carries the post-translational modification Phosphoserine; by HPrK/P.

It belongs to the HPr family.

The protein resides in the cytoplasm. With respect to regulation, phosphorylation on Ser-46 inhibits the phosphoryl transfer from enzyme I to HPr. In terms of biological role, general (non sugar-specific) component of the phosphoenolpyruvate-dependent sugar phosphotransferase system (sugar PTS). This major carbohydrate active-transport system catalyzes the phosphorylation of incoming sugar substrates concomitantly with their translocation across the cell membrane. The phosphoryl group from phosphoenolpyruvate (PEP) is transferred to the phosphoryl carrier protein HPr by enzyme I. Phospho-HPr then transfers it to the PTS EIIA domain. In Xylella fastidiosa (strain Temecula1 / ATCC 700964), this protein is Phosphocarrier protein HPr (ptsH).